The following is a 904-amino-acid chain: E3 ubiquitin-protein ligase HACE1 (904 aa).

7 ANK repeats span residues 34–63 (AVYT…DVNY), 68–97 (VKRS…NPNY), 101–130 (SGCT…DVNI), 134–163 (EGLT…NVDV), 167–196 (MGQT…DINR), 200–230 (SGAT…YLPD), and 232–261 (NGVT…RLFQ). An HECT domain is found at 569 to 904 (SNEKLKQGIA…HCGSYGYTMA (336 aa)). The active-site Glycyl thioester intermediate is Cys-871.

The protein resides in the golgi apparatus. Its subcellular location is the golgi stack membrane. The protein localises to the cytoplasm. It localises to the endoplasmic reticulum. The enzyme catalyses S-ubiquitinyl-[E2 ubiquitin-conjugating enzyme]-L-cysteine + [acceptor protein]-L-lysine = [E2 ubiquitin-conjugating enzyme]-L-cysteine + N(6)-ubiquitinyl-[acceptor protein]-L-lysine.. The protein operates within protein modification; protein ubiquitination. Its function is as follows. E3 ubiquitin-protein ligase involved in Golgi membrane fusion and regulation of small GTPases. Acts as a regulator of Golgi membrane dynamics during the cell cycle: recruited to Golgi membrane by Rab proteins and regulates postmitotic Golgi membrane fusion. Acts by mediating ubiquitination during mitotic Golgi disassembly, ubiquitination serving as a signal for Golgi reassembly later, after cell division. The sequence is that of E3 ubiquitin-protein ligase HACE1 (hace1) from Danio rerio (Zebrafish).